Reading from the N-terminus, the 292-residue chain is 11-beta-hydroxysteroid dehydrogenase 1 (292 aa).

The chain crosses the membrane as a helical span at residues 7-24; that stretch reads YLLPILGIFLAYYYYSAN.

This sequence belongs to the short-chain dehydrogenases/reductases (SDR) family. In terms of assembly, homodimer. As to expression, expressed highest in liver and ovaries (corpora lutea, granulosa cells, thecal, uterine caruncle and intercarunculer tissues), lower expression in kidney and spleen, and lowest in the adrenal.

The protein localises to the endoplasmic reticulum membrane. It carries out the reaction an 11beta-hydroxysteroid + NADP(+) = an 11-oxosteroid + NADPH + H(+). It catalyses the reaction corticosterone + NADP(+) = 11-dehydrocorticosterone + NADPH + H(+). The enzyme catalyses cortisone + NADPH + H(+) = cortisol + NADP(+). The catalysed reaction is a 7beta-hydroxysteroid + NADP(+) = a 7-oxosteroid + NADPH + H(+). It carries out the reaction 7-oxocholesterol + NADPH + H(+) = 7beta-hydroxycholesterol + NADP(+). It catalyses the reaction chenodeoxycholate + NADP(+) = 7-oxolithocholate + NADPH + H(+). The enzyme catalyses 7-oxolithocholate + NADPH + H(+) = ursodeoxycholate + NADP(+). The catalysed reaction is glycochenodeoxycholate + NADP(+) = 7-oxoglycolithocholate + NADPH + H(+). It carries out the reaction taurochenodeoxycholate + NADP(+) = 7-oxotaurolithocholate + NADPH + H(+). It catalyses the reaction tauroursodeoxycholate + NADP(+) = 7-oxotaurolithocholate + NADPH + H(+). The enzyme catalyses glycoursodeoxycholate + NADP(+) = 7-oxoglycolithocholate + NADPH + H(+). The catalysed reaction is 7-oxopregnenolone + NADPH + H(+) = 7beta-hydroxypregnenolone + NADP(+). It carries out the reaction 3beta,7alpha-dihydroxyandrost-5-en-17-one + NADP(+) = 3beta-hydroxy-5-androstene-7,17-dione + NADPH + H(+). It catalyses the reaction 3beta-hydroxy-5-androstene-7,17-dione + NADPH + H(+) = 3beta,7beta-dihydroxyandrost-5-en-17-one + NADP(+). The enzyme catalyses 3beta-hydroxy-5alpha-androstane-7,17-dione + NADPH + H(+) = 3beta,7beta-dihydroxy-5alpha-androstan-17-one + NADP(+). Its function is as follows. Controls the reversible conversion of biologically active glucocorticoids such as cortisone to cortisol, and 11-dehydrocorticosterone to corticosterone in the presence of NADP(H). Participates in the corticosteroid receptor-mediated anti-inflammatory response, as well as metabolic and homeostatic processes. Plays a role in the secretion of aqueous humor in the eye, maintaining a normotensive, intraocular environment. Bidirectional in vitro, predominantly functions as a reductase in vivo, thereby increasing the concentration of active glucocorticoids. It has broad substrate specificity, besides glucocorticoids, it accepts other steroid and sterol substrates. Interconverts 7-oxo- and 7-hydroxy-neurosteroids such as 7-oxopregnenolone and 7beta-hydroxypregnenolone, 7-oxodehydroepiandrosterone (3beta-hydroxy-5-androstene-7,17-dione) and 7beta-hydroxydehydroepiandrosterone (3beta,7beta-dihydroxyandrost-5-en-17-one), among others. Catalyzes the stereo-specific conversion of the major dietary oxysterol, 7-ketocholesterol (7-oxocholesterol), into the more polar 7-beta-hydroxycholesterol metabolite. 7-oxocholesterol is one of the most important oxysterols, it participates in several events such as induction of apoptosis, accumulation in atherosclerotic lesions, lipid peroxidation, and induction of foam cell formation. Mediates the 7-oxo reduction of 7-oxolithocholate mainly to chenodeoxycholate, and to a lesser extent to ursodeoxycholate, both in its free form and when conjugated to glycine or taurine, providing a link between glucocorticoid activation and bile acid metabolism. Catalyzes the synthesis of 7-beta-25-dihydroxycholesterol from 7-oxo-25-hydroxycholesterol in vitro, which acts as a ligand for the G-protein-coupled receptor (GPCR) Epstein-Barr virus-induced gene 2 (EBI2) and may thereby regulate immune cell migration. The protein is 11-beta-hydroxysteroid dehydrogenase 1 of Bos taurus (Bovine).